A 907-amino-acid polypeptide reads, in one-letter code: Translation initiation factor IF-2 (907 aa).

Composition is skewed to basic and acidic residues over residues 223 to 235, 251 to 263, and 270 to 281; these read LAQR…KRAA, VAKE…EKNA, and GGKDWNDSDGKK. Positions 223–320 are disordered; the sequence is LAQRRQEEAK…ENQQHAFTAP (98 aa). The tr-type G domain maps to 407–576; the sequence is PRPPVVTVMG…LLQAEVLELK (170 aa). Residues 416 to 423 are G1; the sequence is GHVDHGKT. 416–423 contacts GTP; it reads GHVDHGKT. Residues 441 to 445 are G2; it reads GITQH. The tract at residues 462-465 is G3; it reads DTPG. GTP is bound by residues 462–466 and 516–519; these read DTPGH and NKID. The segment at 516 to 519 is G4; the sequence is NKID. The tract at residues 552 to 554 is G5; sequence SAK.

It belongs to the TRAFAC class translation factor GTPase superfamily. Classic translation factor GTPase family. IF-2 subfamily.

It is found in the cytoplasm. One of the essential components for the initiation of protein synthesis. Protects formylmethionyl-tRNA from spontaneous hydrolysis and promotes its binding to the 30S ribosomal subunits. Also involved in the hydrolysis of GTP during the formation of the 70S ribosomal complex. In Methylobacillus flagellatus (strain ATCC 51484 / DSM 6875 / VKM B-1610 / KT), this protein is Translation initiation factor IF-2.